We begin with the raw amino-acid sequence, 479 residues long: Aspartyl/glutamyl-tRNA(Asn/Gln) amidotransferase subunit B (479 aa).

The protein belongs to the GatB/GatE family. GatB subfamily. Heterotrimer of A, B and C subunits.

The catalysed reaction is L-glutamyl-tRNA(Gln) + L-glutamine + ATP + H2O = L-glutaminyl-tRNA(Gln) + L-glutamate + ADP + phosphate + H(+). It carries out the reaction L-aspartyl-tRNA(Asn) + L-glutamine + ATP + H2O = L-asparaginyl-tRNA(Asn) + L-glutamate + ADP + phosphate + 2 H(+). Allows the formation of correctly charged Asn-tRNA(Asn) or Gln-tRNA(Gln) through the transamidation of misacylated Asp-tRNA(Asn) or Glu-tRNA(Gln) in organisms which lack either or both of asparaginyl-tRNA or glutaminyl-tRNA synthetases. The reaction takes place in the presence of glutamine and ATP through an activated phospho-Asp-tRNA(Asn) or phospho-Glu-tRNA(Gln). The chain is Aspartyl/glutamyl-tRNA(Asn/Gln) amidotransferase subunit B from Streptococcus suis (strain 98HAH33).